The sequence spans 69 residues: DNA gyrase inhibitor YacG (69 aa).

Residues 1–15 are compositionally biased toward basic and acidic residues; sequence MSDEPEHTAKVEPLR. Positions 1 to 22 are disordered; sequence MSDEPEHTAKVEPLRKPLPCPE. C20, C23, C35, and C39 together coordinate Zn(2+).

Belongs to the DNA gyrase inhibitor YacG family. Interacts with GyrB. Zn(2+) is required as a cofactor.

In terms of biological role, inhibits all the catalytic activities of DNA gyrase by preventing its interaction with DNA. Acts by binding directly to the C-terminal domain of GyrB, which probably disrupts DNA binding by the gyrase. This is DNA gyrase inhibitor YacG from Allorhizobium ampelinum (strain ATCC BAA-846 / DSM 112012 / S4) (Agrobacterium vitis (strain S4)).